The following is a 910-amino-acid chain: Eukaryotic translation initiation factor 3 subunit C (910 aa).

The tract at residues 1–21 (MSRFFANGSESESESSEEEIQ) is disordered. Residues 11–20 (SESESSEEEI) are compositionally biased toward acidic residues. Residues S34, S165, S176, and S185 each carry the phosphoserine modification. Residues 157 to 279 (FREAPDQESE…IRKRAEDDED (123 aa)) are disordered. Residues 162–186 (DQESEAEDEVVALESDGGDAGDDSD) are compositionally biased toward acidic residues. The span at 194-207 (AVPKAVKSAPAKAA) shows a compositional bias: low complexity. The segment covering 209–235 (ADDDDSDDSIDWDSDSESETESSDDEN) has biased composition (acidic residues). Residues 240–268 (MRERFLKRTTEKEEKDDDKRKDKRKEQKT) are compositionally biased toward basic and acidic residues. The PCI domain maps to 639 to 815 (FHMHINLELL…ETVGMHRSEP (177 aa)). The segment at 847–910 (FFQRGNMGNR…QQQVQTIDEE (64 aa)) is disordered. Over residues 862-874 (NRNQNNQGGNWLG) the composition is skewed to low complexity. Basic residues predominate over residues 882 to 891 (RNRNQRGHHK). The segment covering 895 to 910 (DRQQQQQQQVQTIDEE) has biased composition (low complexity).

Belongs to the eIF-3 subunit C family. In terms of assembly, component of the eukaryotic translation initiation factor 3 (eIF-3) complex. The eIF-3 complex interacts with pix.

It is found in the cytoplasm. In terms of biological role, component of the eukaryotic translation initiation factor 3 (eIF-3) complex, which is involved in protein synthesis of a specialized repertoire of mRNAs and, together with other initiation factors, stimulates binding of mRNA and methionyl-tRNAi to the 40S ribosome. The eIF-3 complex specifically targets and initiates translation of a subset of mRNAs involved in cell proliferation. This Drosophila melanogaster (Fruit fly) protein is Eukaryotic translation initiation factor 3 subunit C.